A 435-amino-acid polypeptide reads, in one-letter code: Keratin, type I cytoskeletal 18 (435 aa).

Positions 1–28 are enriched in low complexity; that stretch reads MSLRSSYSVRSSTSQVPVSQMSQMSQMS. The tract at residues 1–36 is disordered; that stretch reads MSLRSSYSVRSSTSQVPVSQMSQMSQMSIKRTTNVP. A head region spans residues 2 to 88; that stretch reads SLRSSYSVRS…TGATGDIMGN (87 aa). The interval 89–123 is coil 1A; it reads EKMAMQNLNDRLASYLRSETLEQANSKLELKIREA. Residues 89–399 enclose the IF rod domain; it reads EKMAMQNLND…RLLDGGDFKL (311 aa). Residues 124 to 140 are linker 1; it reads LEKKGPEVCDYSRFQPI. The tract at residues 141–232 is coil 1B; the sequence is IDDLRRKIFD…KNHDNEVMEL (92 aa). Positions 233–256 are linker 12; that stretch reads RNQISHSGVQVDVDAPKGQDLAKI. The segment at 257-394 is coil 2; it reads MEEIRSKYEK…IATYRRLLDG (138 aa). Residues 395–435 form a tail region; it reads GDFKLQDALEEQKRVKVMTVTQTLVDGKVVSSSTETKEKKF.

It belongs to the intermediate filament family. Heterotetramer of two type I and two type II keratins. Keratin-18 associates with keratin-8. In terms of processing, phosphorylated. Post-translationally, proteolytically cleaved by caspases during epithelial cell apoptosis. Abundantly expressed in an even distribution throughout the optic nerve, localizing specifically to the astrocyte domains. Moderately expressed in spinal cord, brain, liver and oocytes.

Functionally, when phosphorylated, plays a role in filament reorganization. In Carassius auratus (Goldfish), this protein is Keratin, type I cytoskeletal 18 (krt18).